The primary structure comprises 278 residues: Coiled-coil domain-containing protein 121 (278 aa).

Coiled-coil stretches lie at residues 1–30 and 105–243; these read MTDLNKHIKQAQTQRKQLLEESRELHREKL and QAMR…LIQA. The disordered stretch occupies residues 253-278; that stretch reads QCLNRQDVPKTTPSLPQGTKSRINPK.

This Homo sapiens (Human) protein is Coiled-coil domain-containing protein 121 (CCDC121).